A 548-amino-acid chain; its full sequence is T-complex protein 1 subunit theta (548 aa).

An N-acetylalanine modification is found at Ala-2. At Ser-23 the chain carries Phosphoserine. Tyr-30 bears the Phosphotyrosine mark. ADP-binding residues include Tyr-47 and Gly-48. Position 99 (Asp-99) interacts with Mg(2+). ADP contacts are provided by Gly-100, Thr-101, Asn-102, and Phe-103. Residues Gly-100, Thr-101, and Asn-102 each coordinate ATP. Phosphoserine is present on Ser-162. The ADP site is built by Met-169, Ser-170, and Lys-171. Positions 170 and 171 each coordinate ATP. Glycyl lysine isopeptide (Lys-Gly) (interchain with G-Cter in SUMO2) cross-links involve residues Lys-224, Lys-254, and Lys-260. A phosphoserine mark is found at Ser-269 and Ser-317. N6-acetyllysine occurs at positions 318 and 400. Gly-412 is a binding site for ADP. Gly-412 serves as a coordination point for ATP. Lys-459 is covalently cross-linked (Glycyl lysine isopeptide (Lys-Gly) (interchain with G-Cter in SUMO1)). Residue Lys-466 is modified to N6-acetyllysine. Asp-499 lines the ADP pocket. Residues Asp-499 and Lys-504 each coordinate ATP. Tyr-505 is subject to Phosphotyrosine. The tract at residues 529–548 (PAGGPKPPSGKKDWDEDQND) is disordered. Lys-534 participates in a covalent cross-link: Glycyl lysine isopeptide (Lys-Gly) (interchain with G-Cter in SUMO2). Ser-537 carries the phosphoserine modification. Lys-539 participates in a covalent cross-link: Glycyl lysine isopeptide (Lys-Gly) (interchain with G-Cter in SUMO2).

It belongs to the TCP-1 chaperonin family. In terms of assembly, component of the chaperonin-containing T-complex (TRiC), a hexadecamer composed of two identical back-to-back stacked rings enclosing a protein folding chamber. Each ring is made up of eight different subunits: TCP1/CCT1, CCT2, CCT3, CCT4, CCT5, CCT6A/CCT6, CCT7, CCT8. Interacts with PACRG. Interacts with DNAAF4. Interacts with synaptic plasticity regulator PANTS.

The protein localises to the cytoplasm. It localises to the cytoskeleton. It is found in the microtubule organizing center. Its subcellular location is the centrosome. The protein resides in the cilium basal body. The catalysed reaction is ATP + H2O = ADP + phosphate + H(+). Its function is as follows. Component of the chaperonin-containing T-complex (TRiC), a molecular chaperone complex that assists the folding of actin, tubulin and other proteins upon ATP hydrolysis. The TRiC complex mediates the folding of WRAP53/TCAB1, thereby regulating telomere maintenance. As part of the TRiC complex may play a role in the assembly of BBSome, a complex involved in ciliogenesis regulating transports vesicles to the cilia. The sequence is that of T-complex protein 1 subunit theta (CCT8) from Bos taurus (Bovine).